We begin with the raw amino-acid sequence, 102 residues long: Monothiol glutaredoxin-S1 (102 aa).

The region spanning 1 to 101 (MEKISNLLED…SLLRRAGAIW (101 aa)) is the Glutaredoxin domain. Residue C21 participates in [2Fe-2S] cluster binding.

Belongs to the glutaredoxin family. CC-type subfamily.

Its subcellular location is the cytoplasm. May only reduce GSH-thiol disulfides, but not protein disulfides. The chain is Monothiol glutaredoxin-S1 (GRXS1) from Arabidopsis thaliana (Mouse-ear cress).